Here is a 97-residue protein sequence, read N- to C-terminus: Aspartyl/glutamyl-tRNA(Asn/Gln) amidotransferase subunit C (97 aa).

It belongs to the GatC family. In terms of assembly, heterotrimer of A, B and C subunits.

It catalyses the reaction L-glutamyl-tRNA(Gln) + L-glutamine + ATP + H2O = L-glutaminyl-tRNA(Gln) + L-glutamate + ADP + phosphate + H(+). It carries out the reaction L-aspartyl-tRNA(Asn) + L-glutamine + ATP + H2O = L-asparaginyl-tRNA(Asn) + L-glutamate + ADP + phosphate + 2 H(+). Allows the formation of correctly charged Asn-tRNA(Asn) or Gln-tRNA(Gln) through the transamidation of misacylated Asp-tRNA(Asn) or Glu-tRNA(Gln) in organisms which lack either or both of asparaginyl-tRNA or glutaminyl-tRNA synthetases. The reaction takes place in the presence of glutamine and ATP through an activated phospho-Asp-tRNA(Asn) or phospho-Glu-tRNA(Gln). The protein is Aspartyl/glutamyl-tRNA(Asn/Gln) amidotransferase subunit C of Prochlorococcus marinus (strain MIT 9303).